The primary structure comprises 67 residues: UPF0435 protein SSP0913 (67 aa).

The protein belongs to the UPF0435 family.

This is UPF0435 protein SSP0913 from Staphylococcus saprophyticus subsp. saprophyticus (strain ATCC 15305 / DSM 20229 / NCIMB 8711 / NCTC 7292 / S-41).